The following is a 325-amino-acid chain: Phospho-N-acetylmuramoyl-pentapeptide-transferase (325 aa).

10 helical membrane-spanning segments follow: residues 3–23, 48–68, 79–99, 106–126, 136–156, 174–194, 199–219, 223–243, 246–266, and 298–318; these read LMIY…PILI, GTPT…VFVV, AIFA…LKII, LKAY…GFYA, IIVP…PFII, GLAT…SYAT, LAVF…YNAY, VFMG…VAMM, LPLI…SVIL, and IVSI…LSLI.

Belongs to the glycosyltransferase 4 family. MraY subfamily. Mg(2+) serves as cofactor.

The protein localises to the cell membrane. It catalyses the reaction UDP-N-acetyl-alpha-D-muramoyl-L-alanyl-gamma-D-glutamyl-meso-2,6-diaminopimeloyl-D-alanyl-D-alanine + di-trans,octa-cis-undecaprenyl phosphate = di-trans,octa-cis-undecaprenyl diphospho-N-acetyl-alpha-D-muramoyl-L-alanyl-D-glutamyl-meso-2,6-diaminopimeloyl-D-alanyl-D-alanine + UMP. Its pathway is cell wall biogenesis; peptidoglycan biosynthesis. Catalyzes the initial step of the lipid cycle reactions in the biosynthesis of the cell wall peptidoglycan: transfers peptidoglycan precursor phospho-MurNAc-pentapeptide from UDP-MurNAc-pentapeptide onto the lipid carrier undecaprenyl phosphate, yielding undecaprenyl-pyrophosphoryl-MurNAc-pentapeptide, known as lipid I. The sequence is that of Phospho-N-acetylmuramoyl-pentapeptide-transferase from Clostridium novyi (strain NT).